The primary structure comprises 238 residues: Ribonuclease PH (238 aa).

Phosphate is bound by residues arginine 86 and 124-126; that span reads GTR.

This sequence belongs to the RNase PH family. As to quaternary structure, homohexameric ring arranged as a trimer of dimers.

The catalysed reaction is tRNA(n+1) + phosphate = tRNA(n) + a ribonucleoside 5'-diphosphate. Functionally, phosphorolytic 3'-5' exoribonuclease that plays an important role in tRNA 3'-end maturation. Removes nucleotide residues following the 3'-CCA terminus of tRNAs; can also add nucleotides to the ends of RNA molecules by using nucleoside diphosphates as substrates, but this may not be physiologically important. Probably plays a role in initiation of 16S rRNA degradation (leading to ribosome degradation) during starvation. The chain is Ribonuclease PH from Alkalilimnicola ehrlichii (strain ATCC BAA-1101 / DSM 17681 / MLHE-1).